Consider the following 244-residue polypeptide: Tetraspanin-7 (244 aa).

Residues 1 to 11 (METKPVITCLK) are Cytoplasmic-facing. A helical transmembrane segment spans residues 12 to 35 (TLLIIYSFVFWITGVILLAVGVWG). The Extracellular portion of the chain corresponds to 36-51 (KLTLGTYISLIAENST). N-linked (GlcNAc...) asparagine glycosylation occurs at N49. The helical transmembrane segment at 52–70 (NAPYVLIGTGTTIVVFGLF) threads the bilayer. Residues 71–81 (GCFATCRGSPW) lie on the Cytoplasmic side of the membrane. The helical transmembrane segment at 82–107 (MLKLYAMFLSLVFLAELVAGISGFVF) threads the bilayer. Residues 108-208 (RHEIKDTFLR…LVTSFMETNM (101 aa)) lie on the Extracellular side of the membrane. N-linked (GlcNAc...) asparagine glycans are attached at residues N150, N153, N172, and N183. Residues 209–229 (GIIAGVAFGIAFSQLIGMLLA) form a helical membrane-spanning segment. Over 230-244 (CCLSRFITANQYEMV) the chain is Cytoplasmic.

This sequence belongs to the tetraspanin (TM4SF) family.

The protein resides in the membrane. May be involved in cell proliferation and cell motility. This chain is Tetraspanin-7 (TSPAN7), found in Pongo pygmaeus (Bornean orangutan).